A 124-amino-acid polypeptide reads, in one-letter code: MYKLASCCLLFIGFLNPLLSLPLLDSREISFQLSAPHEDARLTPEELERASLLQILPEMLGAERGDILRKADSSTNIFNPRGNLRKFQDFSGQDPNILLSHLLARIWKPYKKRETPDCFWKYCV.

A signal peptide spans 1-20 (MYKLASCCLLFIGFLNPLLS). The propeptide occupies 21-110 (LPLLDSREIS…HLLARIWKPY (90 aa)). An intrachain disulfide couples C118 to C123.

It belongs to the urotensin-2 family. In terms of tissue distribution, brain specific.

Its subcellular location is the secreted. Its function is as follows. Highly potent vasoconstrictor. In Homo sapiens (Human), this protein is Urotensin-2 (UTS2).